We begin with the raw amino-acid sequence, 639 residues long: MSHQETHGFQTEVKQLLNLMIHSLYSNKEIFLRELVSNAADAADKLRYEALTKDELYEGDGELRVRVSADSEKGTVTIEDNGIGMTRDGVIEHLGTIAKSGTAEFFKNLSGDESKDSQLIGQFGVGFYSAFIVADKVTVRTRAAGHAADEAVQWESAGEGEFTVENIVKESRGTEIILHLREEEKEFASDYRLRSIITKYSDHISVPVEMWQEGTPAQEATEEGGEAIPATEGHWKAMNKATALWTRNKSDVTDEEYQEFYKHISHDFADPLLWSHNRVEGKQEYTSLLYIPSKAPWDLWNRDRKHGLKLFVQRVFVMDDAEQFMPSYLRFVQGLIDSNDLPLNVSREILQDNKITTALRTAVTKRVLGMLEKLAKNDPEKYQTFWAEFGQVLKEGPAEDFANKEKIAGLLRFASTHTNEAAHTVSLSDYVERMKEGQSKIYYIVADSHEAAANSPHLELLRKKGIEVLLMSERIDEWLINHLSEFDGKQLHSVTRGDLELGELEDAAEKEAQEKLETESEGLVKRVKEVLGDKVAEVKVTSRLTDTPACVVAGAGEMSSQMIKLMQAAGQAVTESKPVFELNPEHPLVKRLDTEQDEEVFGQWAELLLQQAQLSEKGSLADPSAFIKLMNKMLLASVK.

An a; substrate-binding region spans residues 1 to 347; the sequence is MSHQETHGFQ…SNDLPLNVSR (347 aa). A b region spans residues 348–564; the sequence is EILQDNKITT…AGEMSSQMIK (217 aa). The segment at 565–639 is c; it reads LMQAAGQAVT…MNKMLLASVK (75 aa).

This sequence belongs to the heat shock protein 90 family. In terms of assembly, homodimer.

It localises to the cytoplasm. In terms of biological role, molecular chaperone. Has ATPase activity. This Shewanella loihica (strain ATCC BAA-1088 / PV-4) protein is Chaperone protein HtpG.